A 166-amino-acid polypeptide reads, in one-letter code: Large ribosomal subunit protein uL10 (166 aa).

Belongs to the universal ribosomal protein uL10 family. In terms of assembly, part of the ribosomal stalk of the 50S ribosomal subunit. The N-terminus interacts with L11 and the large rRNA to form the base of the stalk. The C-terminus forms an elongated spine to which L12 dimers bind in a sequential fashion forming a multimeric L10(L12)X complex.

Forms part of the ribosomal stalk, playing a central role in the interaction of the ribosome with GTP-bound translation factors. This Limosilactobacillus reuteri (strain DSM 20016) (Lactobacillus reuteri) protein is Large ribosomal subunit protein uL10.